The following is a 734-amino-acid chain: Protein SKG6 (734 aa).

The interval 30–68 (TRRDDSDSSSSSASSTKNSKSAECTGSKQQCQLPTDSSH) is disordered. The segment covering 37–51 (SSSSSASSTKNSKSA) has biased composition (low complexity). A compositionally biased stretch (polar residues) spans 53–68 (CTGSKQQCQLPTDSSH). The chain crosses the membrane as a helical span at residues 72–96 (VTVGVAVAVPVGVIIIVLAVILCIV). Position 137 is a phosphoserine (serine 137). At threonine 169 the chain carries Phosphothreonine. Serine 191, serine 193, and serine 219 each carry phosphoserine. The residue at position 221 (threonine 221) is a Phosphothreonine. A phosphoserine mark is found at serine 222 and serine 251. The tract at residues 239–327 (RFQESESFRS…LRFGKDDDNY (89 aa)) is disordered. A compositionally biased stretch (polar residues) spans 253 to 273 (IHNNQLSRGSATEGANKQFTF). Positions 280 to 299 (SSSVSEEAEVLNESNESASN) are enriched in low complexity. The span at 309-327 (SSEKTHERNLRFGKDDDNY) shows a compositional bias: basic and acidic residues. Serine 369 carries the post-translational modification Phosphoserine. A disordered region spans residues 647-671 (DLTAKPSYKPAGSFRSVSATNSRNN). Polar residues predominate over residues 661–671 (RSVSATNSRNN). Serine 672 and serine 717 each carry phosphoserine. Residues 707-734 (SVGGILPHSGSQDDLRKQLGSSHNYTVN) form a disordered region. The segment covering 725 to 734 (LGSSHNYTVN) has biased composition (polar residues).

This sequence belongs to the SKG6/TOS2 family. Interacts with ZDS1 and ZDS2. Phosphorylated by CDC28.

The protein localises to the membrane. May be involved in the polarity establishment process. Suppresses the lethality of KEX2-GAS1 double null mutant when overexpressed. In Saccharomyces cerevisiae (strain ATCC 204508 / S288c) (Baker's yeast), this protein is Protein SKG6 (SKG6).